The sequence spans 398 residues: 8-amino-7-oxononanoate synthase (398 aa).

Residue R23 participates in substrate binding. 110–111 (GY) contributes to the pyridoxal 5'-phosphate binding site. H135 serves as a coordination point for substrate. Pyridoxal 5'-phosphate-binding residues include S181, H209, and T238. An N6-(pyridoxal phosphate)lysine modification is found at K241. Residue T355 coordinates substrate.

This sequence belongs to the class-II pyridoxal-phosphate-dependent aminotransferase family. BioF subfamily. Homodimer. The cofactor is pyridoxal 5'-phosphate.

The enzyme catalyses 6-carboxyhexanoyl-[ACP] + L-alanine + H(+) = (8S)-8-amino-7-oxononanoate + holo-[ACP] + CO2. Its pathway is cofactor biosynthesis; biotin biosynthesis. Functionally, catalyzes the decarboxylative condensation of pimeloyl-[acyl-carrier protein] and L-alanine to produce 8-amino-7-oxononanoate (AON), [acyl-carrier protein], and carbon dioxide. The chain is 8-amino-7-oxononanoate synthase from Cellvibrio japonicus (strain Ueda107) (Pseudomonas fluorescens subsp. cellulosa).